Reading from the N-terminus, the 409-residue chain is Formyl-CoA:oxalate CoA-transferase (409 aa).

CoA-binding positions include 17–18 (QS), 71–74 (LNTK), 95–97 (NFG), Arg103, and 135–138 (KAYE). The active-site Nucleophile is the Asp167. The interval 221 to 245 (LAEYPNDDFGDEVPRSGNASGGGQP) is disordered. 242-244 (GGQ) serves as a coordination point for substrate.

It belongs to the CoA-transferase III family. Frc subfamily. In terms of assembly, homodimer.

The enzyme catalyses formyl-CoA + oxalate = oxalyl-CoA + formate. It functions in the pathway metabolic intermediate degradation; oxalate degradation; CO(2) and formate from oxalate: step 1/2. Functionally, involved in the catabolism of oxalate and in the adapatation to low pH via the induction of the oxalate-dependent acid tolerance response (ATR). Catalyzes the transfer of the CoA moiety from formyl-CoA to oxalate. The polypeptide is Formyl-CoA:oxalate CoA-transferase (Streptomyces avermitilis (strain ATCC 31267 / DSM 46492 / JCM 5070 / NBRC 14893 / NCIMB 12804 / NRRL 8165 / MA-4680)).